Reading from the N-terminus, the 316-residue chain is MTMYAKNNTAGKDMLSLLEWNKEELTDIIKLAVAMKTNPAHYSHILSGKILGMIFDKPSTRTRVSFEAGILQLGGQAIVMSSKELQIGRGEPIKDTAHVMSEYIDAIMIRTFSHEKVEELAYHAEIPIINGLTDLHHPCQALADLMTIYEWKDQLEGVKLAYIGDGNNVCHSLLLAGAMVGIDICLAMPKGYEVDETILAKAENLAKQSGGKIFVTEDPKLAVTDADFIYTDVWTSMGQEDENAKRLADFGEKYQVNAELVSGAKPDYHFLHCLPAHREEEVTAEIIDGNHSVIYQQAGNRLHAQKALLAAILEAK.

Carbamoyl phosphate is bound by residues 59-62 (STRT), Gln-86, Arg-110, and 137-140 (HPCQ). L-ornithine contacts are provided by residues Asn-168, Asp-232, and 236-237 (SM). Carbamoyl phosphate-binding positions include 273–274 (CL) and Arg-301.

The protein belongs to the aspartate/ornithine carbamoyltransferase superfamily. OTCase family.

The protein resides in the cytoplasm. It carries out the reaction carbamoyl phosphate + L-ornithine = L-citrulline + phosphate + H(+). It participates in amino-acid biosynthesis; L-arginine biosynthesis; L-arginine from L-ornithine and carbamoyl phosphate: step 1/3. Its function is as follows. Reversibly catalyzes the transfer of the carbamoyl group from carbamoyl phosphate (CP) to the N(epsilon) atom of ornithine (ORN) to produce L-citrulline. This chain is Ornithine carbamoyltransferase, found in Listeria monocytogenes serotype 4b (strain F2365).